The chain runs to 202 residues: LexA repressor (202 aa).

Positions 28–48 form a DNA-binding region, H-T-H motif; that stretch reads RAEIAQRLGFRSPNAAEEHLK. Active-site for autocatalytic cleavage activity residues include S119 and K156.

The protein belongs to the peptidase S24 family. In terms of assembly, homodimer.

The enzyme catalyses Hydrolysis of Ala-|-Gly bond in repressor LexA.. Its function is as follows. Represses a number of genes involved in the response to DNA damage (SOS response), including recA and lexA. Binds to the 16 bp palindromic sequence 5'-CTGTATATATATACAG-3'. In the presence of single-stranded DNA, RecA interacts with LexA causing an autocatalytic cleavage which disrupts the DNA-binding part of LexA, leading to derepression of the SOS regulon and eventually DNA repair. The sequence is that of LexA repressor from Edwardsiella ictaluri (strain 93-146).